The primary structure comprises 216 residues: Ribosomal RNA small subunit methyltransferase G (216 aa).

Residues glycine 73, leucine 78, 124-125 (AE), and arginine 139 contribute to the S-adenosyl-L-methionine site.

The protein belongs to the methyltransferase superfamily. RNA methyltransferase RsmG family.

It is found in the cytoplasm. In terms of biological role, specifically methylates the N7 position of guanine in position 518 of 16S rRNA. This Paenarthrobacter aurescens (strain TC1) protein is Ribosomal RNA small subunit methyltransferase G.